The following is a 419-amino-acid chain: Glutamate-1-semialdehyde 2,1-aminomutase (419 aa).

N6-(pyridoxal phosphate)lysine is present on lysine 259.

The protein belongs to the class-III pyridoxal-phosphate-dependent aminotransferase family. HemL subfamily. It depends on pyridoxal 5'-phosphate as a cofactor.

Its subcellular location is the cytoplasm. It carries out the reaction (S)-4-amino-5-oxopentanoate = 5-aminolevulinate. It participates in porphyrin-containing compound metabolism; protoporphyrin-IX biosynthesis; 5-aminolevulinate from L-glutamyl-tRNA(Glu): step 2/2. This chain is Glutamate-1-semialdehyde 2,1-aminomutase (hemL), found in Sulfurisphaera tokodaii (strain DSM 16993 / JCM 10545 / NBRC 100140 / 7) (Sulfolobus tokodaii).